We begin with the raw amino-acid sequence, 453 residues long: Frizzled/smoothened-like sans CRD protein G (453 aa).

An N-terminal signal peptide occupies residues 1-24 (MIYILKNFIIILFFLLIILKRIES). The Extracellular segment spans residues 25 to 89 (QSLPSLPSPT…PFFTLDEWNK (65 aa)). N-linked (GlcNAc...) asparagine glycosylation is found at N49 and N67. The helical transmembrane segment at 90 to 110 (FLYMSLVMGTISFLCGLFLLI) threads the bilayer. Residues 111 to 124 (TYSPIVNKTHNRHT) lie on the Cytoplasmic side of the membrane. Residues 125-145 (IGVMCMSFGVCLAMCSDMWNF) traverse the membrane as a helical segment. Residues 146-170 (GSNFTDQKSICPSPGQYLTTSNSRC) lie on the Extracellular side of the membrane. N-linked (GlcNAc...) asparagine glycosylation is present at N148. The helical transmembrane segment at 171 to 191 (LGSGIVLQFGGVFGFLNWTLL) threads the bilayer. The Cytoplasmic portion of the chain corresponds to 192 to 209 (SFDLFMNIKGIITKNYDK). A helical transmembrane segment spans residues 210–230 (YYFVATFIIAIIFTFVPIVND). Over 231–250 (QYSMSYIGLGCWLGSAVYQL) the chain is Extracellular. The helical transmembrane segment at 251–271 (IFFWILLSICLIVSSVFIILI) threads the bilayer. Residues 272-296 (LKEIYIIIKQSKQKTSLKGNIRPLL) are Cytoplasmic-facing. Residues 297–317 (CITVTSFAFFYMFFYYISIVI) form a helical membrane-spanning segment. Over 318–352 (EGDYYERILNEYTDCLMDPTKDVSECKFPRMSVAN) the chain is Extracellular. A helical transmembrane segment spans residues 353–373 (EFVFLLCLRLLGIGAFIFYGI). Residues 374–453 (NKEVKKIWLN…DDNFKPIIIK (80 aa)) are Cytoplasmic-facing.

This sequence belongs to the G-protein coupled receptor Fz/Smo family.

The protein localises to the membrane. This Dictyostelium discoideum (Social amoeba) protein is Frizzled/smoothened-like sans CRD protein G (fscG).